A 175-amino-acid chain; its full sequence is ATP synthase subunit b (175 aa).

Residues Leu-20–Trp-40 traverse the membrane as a helical segment.

Belongs to the ATPase B chain family. As to quaternary structure, F-type ATPases have 2 components, F(1) - the catalytic core - and F(0) - the membrane proton channel. F(1) has five subunits: alpha(3), beta(3), gamma(1), delta(1), epsilon(1). F(0) has four main subunits: a(1), b(2) and c(10-14). The alpha and beta chains form an alternating ring which encloses part of the gamma chain. F(1) is attached to F(0) by a central stalk formed by the gamma and epsilon chains, while a peripheral stalk is formed by the delta and b chains.

It localises to the cell inner membrane. Its function is as follows. F(1)F(0) ATP synthase produces ATP from ADP in the presence of a proton or sodium gradient. F-type ATPases consist of two structural domains, F(1) containing the extramembraneous catalytic core and F(0) containing the membrane proton channel, linked together by a central stalk and a peripheral stalk. During catalysis, ATP synthesis in the catalytic domain of F(1) is coupled via a rotary mechanism of the central stalk subunits to proton translocation. In terms of biological role, component of the F(0) channel, it forms part of the peripheral stalk, linking F(1) to F(0). The chain is ATP synthase subunit b from Chlorobium chlorochromatii (strain CaD3).